Here is a 232-residue protein sequence, read N- to C-terminus: UPF0235 protein At5g63440 (232 aa).

It belongs to the UPF0235 family. Interacts with CTN.

It localises to the nucleus speckle. Its function is as follows. May play a role during early embryonic development. Probably involved in pre-mRNA splicing. In Arabidopsis thaliana (Mouse-ear cress), this protein is UPF0235 protein At5g63440.